Consider the following 449-residue polypeptide: MTSSVWQERRHGEDKQRRNDHRSPYQRDRARILHSAAFRRLQAKTQVLGVGMNDFYRTRLTHSLEVSQIGTGIAAQLRRKYPQHKQLLCSMSLLESLCLAHDIGHPPFGHGGEVALNYMMRDHGGFEGNGQTFRILSKLEPYTLDFGMNLCRRTMLGILKYPAPHSKLFVAGKHSEITNHRQLKPSQWPPVKGIFDDDNDIFAWVLEPLSEADRSRFTSTQQGSHPALHHYPHLRTQFKSFDCSIMELADDIAYAVHDLEDAIVMGIVTASQWHQDVAPTLTNSGDAWIRQELADIGNKLFSHEHHLRKDAIGTLVNGFVTAIVISEDDVFEEPLLRFNATLEPEFAIALNVLKQLVYKYVIRKPEIQMLEYKGQQIVMGLFEAFASDPERLLPLNTQERWRESEQQGLNSHRVLADYISGMTDEFAGRLYQQLFSPKAGSNVELSKEM.

A disordered region spans residues 1–27 (MTSSVWQERRHGEDKQRRNDHRSPYQR). Over residues 7-27 (QERRHGEDKQRRNDHRSPYQR) the composition is skewed to basic and acidic residues. The region spanning 59–255 (RLTHSLEVSQ…MELADDIAYA (197 aa)) is the HD domain.

It belongs to the dGTPase family. Type 2 subfamily.

This chain is Deoxyguanosinetriphosphate triphosphohydrolase-like protein, found in Shewanella baltica (strain OS185).